Reading from the N-terminus, the 317-residue chain is Large ribosomal subunit protein uL10 (317 aa).

Tyrosine 24 bears the Phosphotyrosine mark. The residue at position 59 (threonine 59) is a Phosphothreonine. Lysine 264 is covalently cross-linked (Glycyl lysine isopeptide (Lys-Gly) (interchain with G-Cter in ubiquitin)). Residues 294–317 (APAKVEAKEESEESDEDMGFGLFD) are disordered. Lysine 297 participates in a covalent cross-link: Glycyl lysine isopeptide (Lys-Gly) (interchain with G-Cter in SUMO1); alternate. Residue lysine 297 forms a Glycyl lysine isopeptide (Lys-Gly) (interchain with G-Cter in SUMO2); alternate linkage. The segment covering 302–311 (EESEESDEDM) has biased composition (acidic residues). A phosphoserine mark is found at serine 304 and serine 307.

This sequence belongs to the universal ribosomal protein uL10 family. In terms of assembly, P0 forms a pentameric complex by interaction with dimers of P1 and P2. Identified in a IGF2BP1-dependent mRNP granule complex containing untranslated mRNAs. Interacts with APEX1. Interacts with FMR1 isoform 6. In terms of processing, ubiquitinated at Lys-264 by RNF14 and RNF25 in response to ribosome collisions (ribosome stalling).

It localises to the nucleus. Its subcellular location is the cytoplasm. Its function is as follows. Ribosomal protein P0 is the functional equivalent of E.coli protein L10. The protein is Large ribosomal subunit protein uL10 (RPLP0) of Homo sapiens (Human).